The chain runs to 519 residues: MTSAEMTSPNNNSEHQAIAKMRTMIEGFDDISHGGLPIGRSTLVSGTSGTGKTLFSIQFLYNGIIEFDEPGVFVTFEETPQDIIKNARSFGWDLAKLVDEGKLFILDASPDPEGQEVVGGFDLSALIERINYAIQKYRARRVSIDSVTSVFQQYDASSVVRRELFRLVARLKQIGATTVMTTERIEEYGPIARYGVEEFVSDNVVILRNVLEGERRRRTLEILKLRGTSHMKGEYPFTITDHGINIFPLGAMRLTQRSSNVRVSSGVVRLDEMCGGGFFKDSIILATGATGTGKTLLVSRFVENACANKERAILFAYEESRAQLLRNAYSWGMDFEEMERQNLLKIVCAYPESAGLEDHLQIIKSEINDFKPARIAIDSLSALARGVSNNAFRQFVIGVTGYAKQEEITGLFTNTSDQFMGAHSITDSHISTITDTIILLQYVEIRGEMSRAINVFKMRGSWHDKAIREFMISDKGPDIKDSFRNFERIISGSPTRITVDEKSELSRIVRGVQEKGPES.

The KaiC 1 domain occupies 1 to 247 (MTSAEMTSPN…TITDHGINIF (247 aa)). Residues Gly-49, Thr-50, Gly-51, Lys-52, Thr-53, and Leu-54 each coordinate ATP. Thr-53 contacts Mg(2+). Residue Glu-77 is the Proton acceptor in CI (KaiC 1) of the active site. ATP is bound at residue Ser-89. The interval 115–122 (QEVVGGFD) is B-loop, required to bind KaiB and SasA. Residues Lys-224, Leu-225, Arg-226, Thr-228, His-230, Thr-240, and Asp-241 each contribute to the ATP site. Residues 248-260 (PLGAMRLTQRSSN) are linker. One can recognise a KaiC 2 domain in the interval 261-519 (VRVSSGVVRL…RGVQEKGPES (259 aa)). Residues Thr-290, Gly-291, Thr-292, Gly-293, Lys-294, Thr-295, and Leu-296 each coordinate ATP. Thr-295 contacts Mg(2+). Glu-318 serves as a coordination point for Mg(2+). The active-site Proton acceptor in CII (KaiC 2) is Glu-318. Trp-331 is an ATP binding site. Ser-431 carries the post-translational modification Phosphoserine; by autocatalysis. Position 432 is a phosphothreonine; by autocatalysis (Thr-432). ATP contacts are provided by Arg-451, Lys-457, Met-458, Arg-459, Ser-461, His-463, and Lys-465. The A-loop, interacts with KaiA stretch occupies residues 488-497 (RIISGSPTRI).

The protein belongs to the KaiC family. In terms of assembly, homohexamer resembling 2 stacked donuts with a central pore nearly blocked on one side; hexamerization is dependent on ATP-binding. Binds 12 ATP; 6 between each subunit in both layers. KaiB only binds to phospho-Ser-431 KaiC (not doubly phosphorylated KaiC). Complex formation between KaiB and KaiC is regulated by the phosphorylation state of KaiC and by an ATP hydrolysis-driven conformation change in the CI ring of KaiC; complex formation is slow. Slow complex formation is crucial for the timing of the circadian period. KaiB switches to a thioredoxin-like form called KaiB(fs) when bound to KaiC. The KaiABC complex composition changes during the circadian cycle to control KaiC phosphorylation. Complexes KaiC(6), KaiA(2-4):KaiC(6), KaiB(6):KaiC(6) and KaiC(6):KaiB(6):KaiA(12) are among the most important forms, many form cooperatively. Interacts directly with KaiB and SasA. The CI domain binds to KaiB and SasA; as they have a similar fold they compete for the same site on CI. CikA interacts with this protein in the clock complex. Binds to the C-terminus of KaiA via a coiled-coil structure. Forms KaiC(6):KaiB(1) and KaiC(6):KaiB(6) complexes. Mg(2+) is required as a cofactor. Has a 4 step phosphorylation cycle; the autokinase acts first on Thr-432, then Ser-431. When Ser-431 is modified KaiC switches to an autophosphatase mode, acting first on phospho-Thr-432 then phospho-Ser-431. Phosphorylated and dephosphorylated on serine/threonine residues by autocatalysis. Unphosphorylated, mono- and di-phosphorylated forms exist. The phosphorylated form correlates with clock speed. The presence of KaiA increases phosphorylation and stabilizes these forms. In terms of processing, phosphorylated on serine and threonine residues by autocatalysis. Has a 4 step phosphorylation cycle; the autokinase acts first on Thr-432, then Ser-431. When Ser-431 is modified KaiC switches to an autophosphatase mode, acting first on phospho-Thr-432 then phospho-Ser-431.

It catalyses the reaction L-seryl-[protein] + ATP = O-phospho-L-seryl-[protein] + ADP + H(+). The catalysed reaction is L-threonyl-[protein] + ATP = O-phospho-L-threonyl-[protein] + ADP + H(+). The enzyme catalyses ATP + H2O = ADP + phosphate + H(+). With respect to regulation, interaction with KaiA stimulates autophosphorylation, KaiC interaction with KaiB sequesters KaiA, preventing it stimulating the KaiC kinase, leading to autodephosphorylation. A KaiA dimer is sufficient to enhance KaiC phosphorylation. Interaction of KaiA with the A-loop stimulates autokinase activity. Functionally, the KaiABC oscillator complex constitutes the main circadian regulator in cyanobacteria. Complex composition changes during the circadian cycle to control KaiC phosphorylation; KaiA stimulates KaiC autophosphorylation, while KaiB sequesters KaiA, leading to KaiC autodephosphorylation. The Kai complex controls chromosome condensation, leading to a transcription accessible chromosome during the first half of the circadian cycle and a compact, less transcription-accessible chromosome during the latter half. Clock output pathways impact the RpaA transcriptional regulator. Circadian oscillations can be generated in vitro by incubating KaiA, KaiB and KaiC with 1 mM ATP. The cycle is self-sustainable for at least 3 cycles and resistant to temperature changes. Mutations in KaiC alone prolong or reduce the circadian rhythm. A very robust clock is reconstituted with KaiA, KaiB, KaiC, SasA, CikA and RpaA; output is measured by transcription from an appropriate reporter. Its function is as follows. The level of KaiC phosphorylation and KaiC ATPase activity represent the key features of the biochemical oscillator. KaiA homodimer binding to the KaiC CII domain stimulates KaiC's ATPase activity and forms KaiA(2-4):KaiC(6) complexes, which stimulate KaiC autophosphorylation first on Thr-432 then Ser-431. Phospho-Ser-431-KaiC accumulation triggers binding of KaiB to CI to form the KaiB(6):KaiC(6) complex, leading to changes in the output regulators CikA and SasA. KaiB(6):KaiC(6) formation exposes a site for KaiA binding that sequesters KaiA from the CII domain, making the KaiC(6):KaiB(6):KaiA(12) complex that results in KaiC autodephosphorylation. Complete dephosphorylation of KaiC leads to dissociation of KaiA(2):KaiB(1), completing 1 cycle of the Kai oscillator. Has a weak, temperature-independent ATPase activity (about 15 molecules of ATP per day); the addition of KaiA and KaiB increases activity slightly and makes the activity oscillate with a circadian period in vitro for over 60 hours. ATPase activity defines the circadian period. The phosphorylation state of KaiC modulates its ATPase activity and effects KaiB binding. In terms of biological role, there are several clock output pathways; SasA/RpaA, CikA/RpaA and LabA. KaiC enhances the autophosphorylation activity of SasA, which then transfers its phosphate group to RpaA to activate it. Phosphotransfer is maximal when KaiC phosphorylation is active during the circadian cycle. KaiB and KaiC together enhance the phosphatase activity of CikA on phospho-RpaA. Functionally, kaiC is important for metabolic partitioning during the dark to light shift, modulating the balance between the Calvin cycle and oxidative pentose phosphate pathway under natural growth conditions. In Synechococcus elongatus (strain ATCC 33912 / PCC 7942 / FACHB-805) (Anacystis nidulans R2), this protein is Circadian clock oscillator protein KaiC.